The chain runs to 298 residues: Palmitoyl-protein thioesterase 1 (298 aa).

Positions 1-16 are cleaved as a signal peptide; the sequence is MRYFPLLLCLLAITTA. The N-linked (GlcNAc...) asparagine glycan is linked to Asn-20. Intrachain disulfides connect Cys-37/Cys-38, Cys-88/Cys-120, and Cys-144/Cys-151. The Nucleophile role is filled by Ser-107. The active site involves Asp-224. The N-linked (GlcNAc...) asparagine glycan is linked to Asn-250. Residue His-280 is part of the active site.

It belongs to the palmitoyl-protein thioesterase family.

It catalyses the reaction S-hexadecanoyl-L-cysteinyl-[protein] + H2O = L-cysteinyl-[protein] + hexadecanoate + H(+). Functionally, removes thioester-linked fatty acyl groups such as palmitate (hexadecanoate) from modified cysteine residues in proteins or peptides. The polypeptide is Palmitoyl-protein thioesterase 1 (ppt-1) (Caenorhabditis elegans).